A 136-amino-acid chain; its full sequence is Histone H3 (136 aa).

Positions 1-43 (MARTKQTARKSTGGKAPRKQLATKAARKSAPATGGVKKPHRYR) are disordered. At lysine 5 the chain carries N6-methylated lysine. Lysine 10 is subject to N6-acetyllysine; alternate. An N6-methylated lysine; alternate modification is found at lysine 10. Residue serine 11 is modified to Phosphoserine. Residues lysine 15 and lysine 24 each carry the N6-acetyllysine modification. N6-methylated lysine is present on residues lysine 28, lysine 37, and lysine 80.

The protein belongs to the histone H3 family. In terms of assembly, the nucleosome is a histone octamer containing two molecules each of H2A, H2B, H3 and H4 assembled in one H3-H4 heterotetramer and two H2A-H2B heterodimers. The octamer wraps approximately 147 bp of DNA. Post-translationally, acetylation is generally linked to gene activation. Methylation at Lys-5 is linked to gene activation. Methylation at Lys-10 is linked to gene repression.

It localises to the nucleus. Its subcellular location is the chromosome. Its function is as follows. Core component of nucleosome. Nucleosomes wrap and compact DNA into chromatin, limiting DNA accessibility to the cellular machineries which require DNA as a template. Histones thereby play a central role in transcription regulation, DNA repair, DNA replication and chromosomal stability. DNA accessibility is regulated via a complex set of post-translational modifications of histones, also called histone code, and nucleosome remodeling. In Platynereis dumerilii (Dumeril's clam worm), this protein is Histone H3.